Reading from the N-terminus, the 460-residue chain is Arginine biosynthesis bifunctional protein ArgJ, chloroplastic (460 aa).

Residues Met-1–Phe-26 constitute a chloroplast transit peptide. The substrate site is built by Thr-202, Lys-228, Thr-239, Glu-328, Asn-455, and Thr-460. Catalysis depends on Thr-239, which acts as the Nucleophile.

Belongs to the ArgJ family. In terms of assembly, heterodimer of an alpha and a beta chain.

It is found in the plastid. The protein resides in the chloroplast. It carries out the reaction N(2)-acetyl-L-ornithine + L-glutamate = N-acetyl-L-glutamate + L-ornithine. It catalyses the reaction L-glutamate + acetyl-CoA = N-acetyl-L-glutamate + CoA + H(+). Its pathway is amino-acid biosynthesis; L-arginine biosynthesis; L-ornithine and N-acetyl-L-glutamate from L-glutamate and N(2)-acetyl-L-ornithine (cyclic): step 1/1. It functions in the pathway amino-acid biosynthesis; L-arginine biosynthesis; N(2)-acetyl-L-ornithine from L-glutamate: step 1/4. Catalyzes two activities which are involved in the cyclic version of arginine biosynthesis: the synthesis of acetylglutamate from glutamate and acetyl-CoA, and of ornithine by transacetylation between acetylornithine and glutamate. In Citrullus lanatus (Watermelon), this protein is Arginine biosynthesis bifunctional protein ArgJ, chloroplastic.